Here is a 523-residue protein sequence, read N- to C-terminus: Transmembrane protein 266 (523 aa).

Residues 1 to 94 (MTNPQPAIEG…VFLLSASLNS (94 aa)) are Cytoplasmic-facing. A helical membrane pass occupies residues 95-115 (FLVACVILVVILLTLELLIDI). Residues 116–121 (KLLQFS) are Extracellular-facing. The chain crosses the membrane as a helical span at residues 122 to 142 (SAFQFAGVIHWISLVILSVFF). The Cytoplasmic segment spans residues 143–161 (SETVLRIVVLGIWDYIENK). Residues 162–182 (IEVFDGAVIILSLAPMVASTV) traverse the membrane as a helical segment. Over 183–191 (ANGPRSPWD) the chain is Extracellular. Residues 192-212 (AISLIIMLRIWRVKRVIDAYV) form a helical membrane-spanning segment. At 213 to 523 (LPVKLEMEMV…EQKLHRVPEA (311 aa)) the chain is on the cytoplasmic side. Residues 218–270 (EMEMVIQQYEKAKVIQDEQLERLTQICQEQGFEIRQLRAHLAQQDLDLAAERE) adopt a coiled-coil conformation. Residues 380-477 (SASRSSVTRA…PELEHRVSLF (98 aa)) form a disordered region. Residues 382–397 (SRSSVTRAQSDSSQTL) are compositionally biased toward low complexity. Residues 398–411 (GSSMDCSTAREEPS) show a composition bias toward polar residues. The segment covering 421–430 (LPSQQQVEEA) has biased composition (pro residues).

As to quaternary structure, homodimer; disulfide-linked. As to expression, mainly expressed in the cerebellum. Also expressed in cerebral cortex, skeletal muscle and thyroid, but at much lower levels.

It is found in the cell membrane. The protein localises to the cell projection. Its subcellular location is the dendrite. The protein resides in the perikaryon. Functionally, voltage-sensor protein present on the post-synaptic side of glutamatergic mossy fibers and granule cells in the cerebellum. Despite the presence of a voltage-sensor segment, does not form a functional ion channel and its precise role remains unclear. Undergoes both rapid and slow structural rearrangements in response to changes in voltage. Contains a zinc-binding site that can regulate the slow conformational transition. The protein is Transmembrane protein 266 of Homo sapiens (Human).